Here is a 112-residue protein sequence, read N- to C-terminus: T cell receptor alpha variable 21 (112 aa).

Positions 1–19 (METLLGLLILWLQLQWVSS) are cleaved as a signal peptide. Positions 21–112 (QEVTQIPAAL…DSATYLCAVR (92 aa)) constitute an Ig-like domain. 2 N-linked (GlcNAc...) asparagine glycosylation sites follow: asparagine 41 and asparagine 82. Cysteine 42 and cysteine 109 are disulfide-bonded.

As to quaternary structure, alpha-beta TR is a heterodimer composed of an alpha and beta chain; disulfide-linked. The alpha-beta TR is associated with the transmembrane signaling CD3 coreceptor proteins to form the TR-CD3 (TcR or TCR). The assembly of alpha-beta TR heterodimers with CD3 occurs in the endoplasmic reticulum where a single alpha-beta TR heterodimer associates with one CD3D-CD3E heterodimer, one CD3G-CD3E heterodimer and one CD247 homodimer forming a stable octameric structure. CD3D-CD3E and CD3G-CD3E heterodimers preferentially associate with TR alpha and TR beta chains, respectively. The association of the CD247 homodimer is the last step of TcR assembly in the endoplasmic reticulum and is required for transport to the cell surface.

Its subcellular location is the cell membrane. V region of the variable domain of T cell receptor (TR) alpha chain that participates in the antigen recognition. Alpha-beta T cell receptors are antigen specific receptors which are essential to the immune response and are present on the cell surface of T lymphocytes. Recognize peptide-major histocompatibility (MH) (pMH) complexes that are displayed by antigen presenting cells (APC), a prerequisite for efficient T cell adaptive immunity against pathogens. Binding of alpha-beta TR to pMH complex initiates TR-CD3 clustering on the cell surface and intracellular activation of LCK that phosphorylates the ITAM motifs of CD3G, CD3D, CD3E and CD247 enabling the recruitment of ZAP70. In turn ZAP70 phosphorylates LAT, which recruits numerous signaling molecules to form the LAT signalosome. The LAT signalosome propagates signal branching to three major signaling pathways, the calcium, the mitogen-activated protein kinase (MAPK) kinase and the nuclear factor NF-kappa-B (NF-kB) pathways, leading to the mobilization of transcription factors that are critical for gene expression and essential for T cell growth and differentiation. The T cell repertoire is generated in the thymus, by V-(D)-J rearrangement. This repertoire is then shaped by intrathymic selection events to generate a peripheral T cell pool of self-MH restricted, non-autoaggressive T cells. Post-thymic interaction of alpha-beta TR with the pMH complexes shapes TR structural and functional avidity. This Homo sapiens (Human) protein is T cell receptor alpha variable 21.